We begin with the raw amino-acid sequence, 1338 residues long: Protein dispatched homolog 3 (1338 aa).

Over 1–67 (MDTEDDPLLQ…VGWIFTNPYC (67 aa)) the chain is Cytoplasmic. Residues 68–88 (AGFILFLGCAIPAVLAVVMFL) traverse the membrane as a helical segment. The Lumenal segment spans residues 89–406 (HYPALDIDIS…YEVRRTFNND (318 aa)). The tract at residues 164–196 (TRAKRSAPQGRTSSPEPRAHPHPGNETSRVTRG) is disordered. The 159-residue stretch at 401–559 (RTFNNDMLLA…LFTMPAALGI (159 aa)) folds into the SSD domain. Residues 407–427 (MLLAFISSSCIAVLVYILTSC) traverse the membrane as a helical segment. Ser-428 is a topological domain (cytoplasmic). The chain crosses the membrane as a helical span at residues 429–449 (VFLSFFGIASIGLSCLVALFL). Over 450–452 (YHV) the chain is Lumenal. A helical transmembrane segment spans residues 453–473 (VFGIQYLGILNGVAAFVIVGI). At 474–517 (GVDDVFVFINTYRQATHLKDLRLRMIHTIQTAGKATFFTSLTTA) the chain is on the cytoplasmic side. Residues 518 to 538 (AAYAANIFSQIPAVHDFGLFM) form a helical membrane-spanning segment. A topological domain (lumenal) is located at residue Ser-539. A helical membrane pass occupies residues 540-560 (LIVSCCWVAVLFTMPAALGIW). Topologically, residues 561–672 (TLYVSPLESS…WVLWSAVKSR (112 aa)) are cytoplasmic. Residues 673-693 (WVIVGLFLLVLLLSIFFASRL) traverse the membrane as a helical segment. Over 694 to 1128 (RPASRAPVLF…IFMEIIGVQS (435 aa)) the chain is Lumenal. The segment at 747 to 768 (SLEKKKRGSASPWGSKGSISDT) is disordered. Residues 1129 to 1149 (ALYGLILSLVICVAAVAVFTT) form a helical membrane-spanning segment. Position 1150 (His-1150) is a topological domain, cytoplasmic. Residues 1151-1171 (ILLLLPVLLSILGVVCLVVTI) form a helical membrane-spanning segment. Residues 1172 to 1237 (MYWSGWEMGA…TIEAIRHVGV (66 aa)) lie on the Lumenal side of the membrane. A helical membrane pass occupies residues 1238–1258 (AIVSSAVTTVIATVPLFFCII). Topologically, residues 1259 to 1266 (APFAKFGK) are cytoplasmic. A helical transmembrane segment spans residues 1267 to 1287 (IVALNTGVSILYTLTVSTALL). The Lumenal segment spans residues 1288–1302 (SIMGPGTFTRSRTSC). Residues 1303–1323 (LKAVAGVLLAGLLGLCICLAL) form a helical membrane-spanning segment. Residues 1324 to 1338 (LKGGFKIPLPNGTAL) lie on the Cytoplasmic side of the membrane.

Belongs to the patched family. In terms of tissue distribution, expressed in retina, hippocampus and cerebellum. Expressed in the ganglion and bipolar cells of the inner and outer nuclear layers of the retina and in Purkinje cells (at protein level). Expressed strongly in brain and retina, weakly in testis and bone marrow.

It is found in the endoplasmic reticulum membrane. The protein localises to the nucleus membrane. The protein resides in the cytoplasmic vesicle membrane. Plays a role in neuronal proliferation and differentiation. Plays a role in the accumulation of cellular cholesterol. Involved in intracellular lipid droplet formation. May contribute to cholesterol homeostasis in neuronal cells. This chain is Protein dispatched homolog 3, found in Gallus gallus (Chicken).